An 82-amino-acid chain; its full sequence is Escargot/snail protein homolog (82 aa).

4 consecutive C2H2-type zinc fingers follow at residues 1-5, 18-40, 44-66, and 72-82; these read HQQFH, FSCK…IRTH, CKCP…IRTH, and FSCQHCQSAFV.

Belongs to the snail C2H2-type zinc-finger protein family.

The protein localises to the nucleus. This is Escargot/snail protein homolog from Calliphora vicina (Blue blowfly).